The chain runs to 207 residues: Large ribosomal subunit protein uL4 (207 aa).

The segment at 49 to 78 (HAVKNRSAVSGGGRKPWRQKGTGRARQGSI) is disordered.

This sequence belongs to the universal ribosomal protein uL4 family. As to quaternary structure, part of the 50S ribosomal subunit.

Its function is as follows. One of the primary rRNA binding proteins, this protein initially binds near the 5'-end of the 23S rRNA. It is important during the early stages of 50S assembly. It makes multiple contacts with different domains of the 23S rRNA in the assembled 50S subunit and ribosome. Functionally, forms part of the polypeptide exit tunnel. This chain is Large ribosomal subunit protein uL4, found in Streptococcus sanguinis (strain SK36).